A 191-amino-acid chain; its full sequence is UPF0149 protein VV2847 (191 aa).

This sequence belongs to the UPF0149 family.

In Vibrio vulnificus (strain YJ016), this protein is UPF0149 protein VV2847.